The sequence spans 257 residues: NAD-capped RNA hydrolase NudC (257 aa).

Substrate is bound by residues lysine 25 and arginine 69. Zn(2+)-binding residues include cysteine 98 and cysteine 101. Glutamate 111 contributes to the substrate binding site. The Zn(2+) site is built by cysteine 116 and cysteine 119. Tyrosine 124 serves as a coordination point for substrate. The Nudix hydrolase domain maps to 125–248; it reads PQIAPCIIVA…TVARRLIEDT (124 aa). A divalent metal cation contacts are provided by alanine 158, glutamate 174, and glutamate 178. The Nudix box motif lies at 159–180; sequence GFVEVGETLEQAVAREVMEESG. 192–199 is a substrate binding site; that stretch reads QPWPFPQS. Glutamate 219 lines the a divalent metal cation pocket. A substrate-binding site is contributed by alanine 241.

This sequence belongs to the Nudix hydrolase family. NudC subfamily. As to quaternary structure, homodimer. The cofactor is Mg(2+). Requires Mn(2+) as cofactor. It depends on Zn(2+) as a cofactor.

It carries out the reaction a 5'-end NAD(+)-phospho-ribonucleoside in mRNA + H2O = a 5'-end phospho-adenosine-phospho-ribonucleoside in mRNA + beta-nicotinamide D-ribonucleotide + 2 H(+). It catalyses the reaction NAD(+) + H2O = beta-nicotinamide D-ribonucleotide + AMP + 2 H(+). The catalysed reaction is NADH + H2O = reduced beta-nicotinamide D-ribonucleotide + AMP + 2 H(+). In terms of biological role, mRNA decapping enzyme that specifically removes the nicotinamide adenine dinucleotide (NAD) cap from a subset of mRNAs by hydrolyzing the diphosphate linkage to produce nicotinamide mononucleotide (NMN) and 5' monophosphate mRNA. The NAD-cap is present at the 5'-end of some mRNAs and stabilizes RNA against 5'-processing. Has preference for mRNAs with a 5'-end purine. Catalyzes the hydrolysis of a broad range of dinucleotide pyrophosphates. The chain is NAD-capped RNA hydrolase NudC from Shigella dysenteriae serotype 1 (strain Sd197).